We begin with the raw amino-acid sequence, 502 residues long: ATP synthase subunit alpha (502 aa).

Residue 169–176 (GDRATGKT) participates in ATP binding.

Belongs to the ATPase alpha/beta chains family. In terms of assembly, F-type ATPases have 2 components, CF(1) - the catalytic core - and CF(0) - the membrane proton channel. CF(1) has five subunits: alpha(3), beta(3), gamma(1), delta(1), epsilon(1). CF(0) has three main subunits: a(1), b(2) and c(9-12). The alpha and beta chains form an alternating ring which encloses part of the gamma chain. CF(1) is attached to CF(0) by a central stalk formed by the gamma and epsilon chains, while a peripheral stalk is formed by the delta and b chains.

It localises to the cell inner membrane. The enzyme catalyses ATP + H2O + 4 H(+)(in) = ADP + phosphate + 5 H(+)(out). Its function is as follows. Produces ATP from ADP in the presence of a proton gradient across the membrane. The alpha chain is a regulatory subunit. This is ATP synthase subunit alpha from Hydrogenobaculum sp. (strain Y04AAS1).